The chain runs to 515 residues: Protein disulfide-isomerase (515 aa).

The signal sequence occupies residues 1–20 (MRSFAPWLVSLLGASAVVAA). Thioredoxin domains are found at residues 21 to 132 (ADTE…QSLP) and 339 to 470 (VLDG…ENGK). Residues cysteine 54, cysteine 57, cysteine 389, and cysteine 392 each act as nucleophile in the active site. Cystine bridges form between cysteine 54-cysteine 57 and cysteine 389-cysteine 392. A disordered region spans residues 478 to 515 (VASEETQEGGDVTEAAPSATEAETPAATDDEKAEHDEL). Residues 490-504 (TEAAPSATEAETPAA) show a composition bias toward low complexity. Basic and acidic residues predominate over residues 506-515 (DDEKAEHDEL). The Prevents secretion from ER motif lies at 512-515 (HDEL).

It belongs to the protein disulfide isomerase family.

Its subcellular location is the endoplasmic reticulum lumen. It carries out the reaction Catalyzes the rearrangement of -S-S- bonds in proteins.. Its function is as follows. Participates in the folding of proteins containing disulfide bonds, may be involved in glycosylation, prolyl hydroxylation and triglyceride transfer. This is Protein disulfide-isomerase (pdiA) from Aspergillus niger.